We begin with the raw amino-acid sequence, 106 residues long: MKIALICSVFLVCLAYTWADEDVCSLPMNDGLCRALHKRYYYDSATKTCKMFYYGGCAGNANNFETKRACAEKCYKNKALIKTRKRKPKKKKNNKESSEMTIINMD.

An N-terminal signal peptide occupies residues 1–19 (MKIALICSVFLVCLAYTWA). The 51-residue stretch at 24–74 (CSLPMNDGLCRALHKRYYYDSATKTCKMFYYGGCAGNANNFETKRACAEKC) folds into the BPTI/Kunitz inhibitor domain. Intrachain disulfides connect Cys-24–Cys-74, Cys-33–Cys-57, and Cys-49–Cys-70. A compositionally biased stretch (basic residues) spans 84-93 (RKRKPKKKKN). Residues 84 to 106 (RKRKPKKKKNNKESSEMTIINMD) are disordered.

This sequence belongs to the venom Kunitz-type family. Monomer. Interacts with mouse, bovine and human coagulation factor X (F10) (activated). Interacts with human coagulation factor XI (F11) (activated). Interacts with human coagulation factor IX (F9) (activated). Interacts with host plasmin (PLG). Interacts with host kallikrein. As to expression, female salivary gland (at protein level).

The protein resides in the secreted. Salivary anticoagulant that targets host coagulation factor Xa (F10). Blocks activity of host prothrombinase (F10-F5). Inhibits factor Xa-mediated acute inflammation in the host. Inhibits other host proteases involved in blood coagulation and inflammation: cathepsin G (CTSG), kallikrein, trypsin, alpha-chymotrypsin, beta-tryptase, plasmin (PLG), elastase, proteinase 3 (PRTN3) and coagulation factor XIa (F11). Inhibits lipopolysaccharide-induced procoagulant effect in human endothelial cells. Inhibits Xa-mediated cleavage of protease-activated receptor 2 (PAR-2/F2RL1) in the host. In Simulium guianense (Black fly), this protein is Guianensin.